A 339-amino-acid chain; its full sequence is tRNA N6-adenosine threonylcarbamoyltransferase (339 aa).

Fe cation is bound by residues His-117 and His-121. Substrate-binding positions include 140-144 (VVSGG), Asp-173, Gly-186, and Asn-279. Asp-307 provides a ligand contact to Fe cation.

Belongs to the KAE1 / TsaD family. It depends on Fe(2+) as a cofactor.

It localises to the cytoplasm. It carries out the reaction L-threonylcarbamoyladenylate + adenosine(37) in tRNA = N(6)-L-threonylcarbamoyladenosine(37) in tRNA + AMP + H(+). Functionally, required for the formation of a threonylcarbamoyl group on adenosine at position 37 (t(6)A37) in tRNAs that read codons beginning with adenine. Is involved in the transfer of the threonylcarbamoyl moiety of threonylcarbamoyl-AMP (TC-AMP) to the N6 group of A37, together with TsaE and TsaB. TsaD likely plays a direct catalytic role in this reaction. The sequence is that of tRNA N6-adenosine threonylcarbamoyltransferase from Syntrophomonas wolfei subsp. wolfei (strain DSM 2245B / Goettingen).